Consider the following 88-residue polypeptide: Small ribosomal subunit protein uS15 (88 aa).

This sequence belongs to the universal ribosomal protein uS15 family. Part of the 30S ribosomal subunit. Forms a bridge to the 50S subunit in the 70S ribosome, contacting the 23S rRNA.

Functionally, one of the primary rRNA binding proteins, it binds directly to 16S rRNA where it helps nucleate assembly of the platform of the 30S subunit by binding and bridging several RNA helices of the 16S rRNA. Its function is as follows. Forms an intersubunit bridge (bridge B4) with the 23S rRNA of the 50S subunit in the ribosome. This is Small ribosomal subunit protein uS15 from Geobacter metallireducens (strain ATCC 53774 / DSM 7210 / GS-15).